Here is a 492-residue protein sequence, read N- to C-terminus: GTPase Der (492 aa).

EngA-type G domains are found at residues 3–166 (PVVA…MDDV) and 205–378 (IKLA…DSST). GTP is bound by residues 9–16 (GRPNVGKS), 56–60 (DTGGI), 118–121 (NKTD), 211–218 (GRPNVGKS), 258–262 (DTAGV), and 323–326 (NKWD). A KH-like domain is found at 379–463 (RRVSTALLTR…PIRIQFKEGA (85 aa)).

The protein belongs to the TRAFAC class TrmE-Era-EngA-EngB-Septin-like GTPase superfamily. EngA (Der) GTPase family. As to quaternary structure, associates with the 50S ribosomal subunit.

Its function is as follows. GTPase that plays an essential role in the late steps of ribosome biogenesis. The sequence is that of GTPase Der from Cronobacter sakazakii (strain ATCC BAA-894) (Enterobacter sakazakii).